Consider the following 357-residue polypeptide: Peptide chain release factor 1 (357 aa).

At Q233 the chain carries N5-methylglutamine.

The protein belongs to the prokaryotic/mitochondrial release factor family. Post-translationally, methylated by PrmC. Methylation increases the termination efficiency of RF1.

Its subcellular location is the cytoplasm. Peptide chain release factor 1 directs the termination of translation in response to the peptide chain termination codons UAG and UAA. This is Peptide chain release factor 1 from Enterococcus faecalis (strain ATCC 700802 / V583).